The sequence spans 141 residues: Hemoglobin subunit alpha (141 aa).

In terms of domain architecture, Globin spans 1–141 (VLSPADKSNV…VSTVLVSKYR (141 aa)). A Phosphoserine modification is found at Ser-3. An N6-succinyllysine mark is found at Lys-7 and Lys-11. An N6-acetyllysine; alternate modification is found at Lys-16. An N6-succinyllysine; alternate modification is found at Lys-16. Residue Tyr-24 is modified to Phosphotyrosine. A Phosphoserine modification is found at Ser-35. The residue at position 40 (Lys-40) is an N6-succinyllysine. Residue Ser-49 is modified to Phosphoserine. His-58 contributes to the O2 binding site. His-87 is a binding site for heme b. Phosphoserine is present on Ser-102. A Phosphothreonine modification is found at Thr-108. At Ser-124 the chain carries Phosphoserine. At Thr-134 the chain carries Phosphothreonine. Residue Ser-138 is modified to Phosphoserine.

It belongs to the globin family. Heterotetramer of two alpha chains and two beta chains. Red blood cells.

Its function is as follows. Involved in oxygen transport from the lung to the various peripheral tissues. Functionally, hemopressin acts as an antagonist peptide of the cannabinoid receptor CNR1. Hemopressin-binding efficiently blocks cannabinoid receptor CNR1 and subsequent signaling. The polypeptide is Hemoglobin subunit alpha (HBA) (Chalinolobus morio (Chocolate-wattled bat)).